Consider the following 275-residue polypeptide: MTRFAPGAPAWFDLGSPDVAASADFYTGLFGWTATVVSDPGAGGYTTFSSDGKLVAAVARHQIDTPYHRPYGPGNDQHGMPAIWTVYFATDDADALTKRVETAGGEVIMTPMDVLGLGRMAVFADPAGAAFAVWRKGVMEGAEVTGVPGSVGWVELVTDGIGAARDFYPATLGLAPADTGLKGVTDPVWHIGDTPVAGTQELGVTGAVRPHWAVLFAVHDCDATVRRAVELGGSVENEPADTPRGRRADLLDPHGAGFSVVELREGYPAAAGGAS.

VOC domains are found at residues 8–136 (APAW…VWRK) and 150–263 (SVGW…VVEL).

The protein operates within antibiotic biosynthesis; daunorubicin biosynthesis. It participates in antibiotic biosynthesis; carminomycin biosynthesis. Its function is as follows. Involved in the biosynthesis of the anthracyclines carminomycin and daunorubicin (daunomycin) which are aromatic polyketide antibiotics that exhibit high cytotoxicity and are widely applied in the chemotherapy of a variety of cancers. In vivo, it acts jointly with DoxA in the conversion of 13-deoxycarminomycin and 13-deoxydaunorubicin to yield carminomycin and daunorubicin, respectively. In vitro, it also acts jointly with DoxA in the C-14 hydroxylation of daunorubicin to form doxorubicin, although this strain is not a doxorubicin producer. This Streptomyces peucetius protein is Anthracycline biosynthesis protein DnrV (dnrV).